Here is a 236-residue protein sequence, read N- to C-terminus: Auxin-responsive protein IAA13 (236 aa).

Disordered stretches follow at residues 1–24 (MAGADVDVGTELRLGLPGGGGGAA), 52–93 (EAAA…WPPV), and 105–130 (SVKSKKEEEADKQQQQPAANASGSNS). The EAR-like (transcriptional repression) motif lies at 12–16 (LRLGL). A compositionally biased stretch (low complexity) spans 52–61 (EAAAGKAEAP). The span at 62-81 (AAEKAKRPAEAAAADAEKPP) shows a compositional bias: basic and acidic residues. A compositionally biased stretch (low complexity) spans 117–130 (QQQQPAANASGSNS). A PB1 domain is found at 131-218 (SAFVKVSMDG…SCKRLRIMKG (88 aa)).

This sequence belongs to the Aux/IAA family. Homodimers and heterodimers.

Its subcellular location is the nucleus. In terms of biological role, aux/IAA proteins are short-lived transcriptional factors that function as repressors of early auxin response genes at low auxin concentrations. The polypeptide is Auxin-responsive protein IAA13 (IAA13) (Oryza sativa subsp. japonica (Rice)).